Reading from the N-terminus, the 420-residue chain is Histidine--tRNA ligase (420 aa).

This sequence belongs to the class-II aminoacyl-tRNA synthetase family. In terms of assembly, homodimer.

It localises to the cytoplasm. It catalyses the reaction tRNA(His) + L-histidine + ATP = L-histidyl-tRNA(His) + AMP + diphosphate + H(+). The sequence is that of Histidine--tRNA ligase from Macrococcus caseolyticus (strain JCSC5402) (Macrococcoides caseolyticum).